Consider the following 957-residue polypeptide: Calsyntenin-3 (957 aa).

The N-terminal stretch at 1-19 (MTPLLFPLLLASLLPSSSC) is a signal peptide. Over 20–848 (NKANKHKPWI…SHRNSMVPSA (829 aa)) the chain is Extracellular. Cadherin domains are found at residues 29 to 145 (IEAE…APVF) and 146 to 246 (VERL…KPSW). 3 N-linked (GlcNAc...) asparagine glycosylation sites follow: Asn299, Asn347, and Asn508. A helical transmembrane segment spans residues 849-869 (ATLIIVVCVGFLVLMVVLGLV). Residues 870-957 (RIHSLHRRVS…RIIETPPHRY (88 aa)) are Cytoplasmic-facing. The interval 919 to 957 (CVAGAAGGQQDDEDSSDSEAADSPSSDERRIIETPPHRY) is disordered. Residues 928–938 (QDDEDSSDSEA) show a composition bias toward acidic residues. Basic and acidic residues predominate over residues 944–957 (SDERRIIETPPHRY).

Belongs to the calsyntenin family. As to quaternary structure, interacts (via cadherin domains) with both alpha and beta isoforms of neurexins (NRXN1, NRXN2 and NRXN3). Directly interacts with APBA2. Forms a tripartite complex with APBA2 and APP. Interacts with low affinity with KLC1. Interacts with SLC23A2/SVCT2. Post-translationally, proteolytically processed under normal cellular conditions. A primary zeta-cleavage generates a large extracellular (soluble) N-terminal domain (sAlc) and a short C-terminal transmembrane fragment (CTF1). A secondary cleavage catalyzed by gamma-secretase within the transmembrane domain releases the beta-Alc-beta chain in the extracellular milieu and produces an intracellular fragment (AlcICD). This processing is strongly suppressed in the tripartite complex formed with APBA2 and APP, which seems to prevent the association with gamma-secretase.

The protein localises to the postsynaptic cell membrane. The protein resides in the endoplasmic reticulum membrane. It is found in the golgi apparatus membrane. It localises to the cell projection. Its subcellular location is the dendrite. Functionally, postsynaptic adhesion molecule that binds to presynaptic neurexins to mediate both excitatory and inhibitory synapse formation. Promotes synapse development by acting as a cell adhesion molecule at the postsynaptic membrane, which associates with both neurexin-alpha and neurexin-beta proteins at the presynaptic membrane. Regulates the balance between excitatory and inhibitory synapses by inhibiting formation of excitatory parallel-fiber synapses and promoting formation of inhibitory synapses in the same neuron. May also be involved in ascorbate (vitamin C) uptake via its interaction with SLC23A2/SVCT2. Complex formation with APBA2 and APP, stabilizes APP metabolism and enhances APBA2-mediated suppression of beta-APP40 secretion, due to the retardation of intracellular APP maturation. This Bos taurus (Bovine) protein is Calsyntenin-3 (CLSTN3).